The sequence spans 373 residues: Chaperone protein DnaJ (373 aa).

In terms of domain architecture, J spans 5-70; that stretch reads DYYELLEVDR…EKRALYDQYG (66 aa). The segment at 134-211 adopts a CR-type zinc-finger fold; that stretch reads GTQKEVHYSF…CSGKGYRIEK (78 aa). Zn(2+) is bound by residues cysteine 147, cysteine 150, cysteine 163, cysteine 166, cysteine 185, cysteine 188, cysteine 199, and cysteine 202. CXXCXGXG motif repeat units lie at residues 147 to 154, 163 to 170, 185 to 192, and 199 to 206; these read CSACKGTG, CPECHGRG, CPRCHGQG, and CEECSGKG.

Belongs to the DnaJ family. As to quaternary structure, homodimer. Zn(2+) is required as a cofactor.

Its subcellular location is the cytoplasm. In terms of biological role, participates actively in the response to hyperosmotic and heat shock by preventing the aggregation of stress-denatured proteins and by disaggregating proteins, also in an autonomous, DnaK-independent fashion. Unfolded proteins bind initially to DnaJ; upon interaction with the DnaJ-bound protein, DnaK hydrolyzes its bound ATP, resulting in the formation of a stable complex. GrpE releases ADP from DnaK; ATP binding to DnaK triggers the release of the substrate protein, thus completing the reaction cycle. Several rounds of ATP-dependent interactions between DnaJ, DnaK and GrpE are required for fully efficient folding. Also involved, together with DnaK and GrpE, in the DNA replication of plasmids through activation of initiation proteins. The sequence is that of Chaperone protein DnaJ from Nitratiruptor sp. (strain SB155-2).